The following is a 1097-amino-acid chain: MGLPEVMPASVLRGQLLLFVLLLLGPQISQGLVITPPGPEFVLNISSTFVLTCSSSAPVMWEQMSQVPWQEAAMNQDGTFSSVLTLTNVTGGDTGEYFCVYNNSLGPELSERKRIYIFVPDPTMGFLPMDSEDLFIFVTDVTETTIPCRVTDPQLEVTLHEKKVDIPLHVPYDHQRGFIGTFEDKTYICKTTIGDREVDSDTYYVYSLQVSSINVSVNAVQTVVRQGESITIRCIVMGNDVVNFQWTYPRMKSGRLVEPVTDYLFGVPSRIGSILHIPTAELSDSGTYTCNVSVSVNDHGDEKAINVTVIENGYVRLLETLEDVQIAELHRSRTLQVVFEAYPTPSVLWFKDNRTLGDSSAGELVLSTRNVSETRYVSELTLVRVKVSEAGYYTMRAFHADDQVQLSFKLQVNVPVRVLELSESHPANGEQILRCRGRGMPQPNVTWSTCRDLKRCPRKLSPTPLGNSSKEESQLETNVTFWEEDQEYEVVSTLRLRHVDQPLSVRCMLQNSMGRDSQEVTVVPHSLPFKVVVISAILALVVLTVISLIILIMLWQRKPRYEIRWKVIESVSSDGHEYIYVDPVQLPYDSTWELPRDQLVLGRTLGSGAFGQVVEATAHGLSHSQATMKVAVKMLKSTARSSEKQALMSELKIMSHLGPHLNVVNLLGACTKGGPIYIITEYCRYGDLVDYLHRNKHTFLQRHSNKHCPPSTELYSNALPVGLSLPSHLNLTGESDGGYMDMSKDESVDYVPMLDMKGHIKYADIESSSYMAPYDNYVPSAPERTYRATLINDSPVLSYTDLVGFSYQVANGMEFLASKNCVHRDLAARNVLICEGKLVKICDFGLARDIMRDSNYISKGSTFLPLKWMAPESIFNSLYTTLSDVWSFGILLWEIFTLGGTPYPELPMNDQFYNAIKRGYRMAQPAHASDEIYEIMQKCWEEKFETRPPFSQLVLLLERLLGEGYKKKYQQVDEEFLRSDHPAILRSQARLPGLHSLRSPLDTSSVLYTAVQPNETDNDYIIPLPDPKPDAADEGLLEGSPSLASSTLNEVNTSSTISCDSPLELQEEPQAEPEAQLEQPQDSGCPGPLAEAEDSFL.

Residues 1–31 (MGLPEVMPASVLRGQLLLFVLLLLGPQISQG) form the signal peptide. 3 consecutive Ig-like C2-type domains span residues 32 to 119 (LVIT…YIFV), 128 to 209 (PMDS…YSLQ), and 213 to 308 (INVS…INVT). Topologically, residues 32–531 (LVITPPGPEF…VVPHSLPFKV (500 aa)) are extracellular. 3 N-linked (GlcNAc...) asparagine glycosylation sites follow: N44, N88, and N102. Cysteines 53 and 99 form a disulfide. The cysteines at positions 148 and 189 are disulfide-linked. N214 carries an N-linked (GlcNAc...) asparagine glycan. A disulfide bridge links C234 with C290. Residues N291, N306, N353, N370, N444, N467, and N478 are each glycosylated (N-linked (GlcNAc...) asparagine). Residues 415–523 (PVRVLELSES…GRDSQEVTVV (109 aa)) form the Ig-like C2-type 4 domain. A disulfide bridge links C435 with C507. Residues 532–552 (VVISAILALVVLTVISLIILI) form a helical membrane-spanning segment. At 553–1097 (MLWQRKPRYE…PLAEAEDSFL (545 aa)) the chain is on the cytoplasmic side. A phosphotyrosine; by autocatalysis mark is found at Y561, Y578, and Y580. The region spanning 599 to 961 (LVLGRTLGSG…QLVLLLERLL (363 aa)) is the Protein kinase domain. Residues 605-613 (LGSGAFGQV) and K633 each bind ATP. Y685 bears the Phosphotyrosine; by ABL1 and ABL2 mark. 7 positions are modified to phosphotyrosine; by autocatalysis: Y715, Y739, Y750, Y762, Y770, Y774, and Y777. The active-site Proton acceptor is D825. Phosphotyrosine; by autocatalysis is present on Y856. Phosphotyrosine; by ABL1 and ABL2 occurs at positions 933 and 969. 2 positions are modified to phosphotyrosine; by autocatalysis: Y1008 and Y1020. Residues 1016-1097 (TDNDYIIPLP…PLAEAEDSFL (82 aa)) form a disordered region. The span at 1042–1059 (SLASSTLNEVNTSSTISC) shows a compositional bias: polar residues. Low complexity predominate over residues 1072–1081 (EPEAQLEQPQ).

This sequence belongs to the protein kinase superfamily. Tyr protein kinase family. CSF-1/PDGF receptor subfamily. As to quaternary structure, interacts with homodimeric PDGFB and PDGFD, and with heterodimers formed by PDGFA and PDGFB. May also interact with homodimeric PDGFC. Monomer in the absence of bound ligand. Interaction with homodimeric PDGFB, heterodimers formed by PDGFA and PDGFB or homodimeric PDGFD, leads to receptor dimerization, where both PDGFRA homodimers and heterodimers with PDGFRB are observed. Interacts with SH2B2/APS. Interacts directly (tyrosine phosphorylated) with SHB. Interacts (tyrosine phosphorylated) with PIK3R1 and RASA1. Interacts (tyrosine phosphorylated) with CBL. Interacts (tyrosine phosphorylated) with SRC and SRC family kinases. Interacts (tyrosine phosphorylated) with PIK3C2B, maybe indirectly. Interacts (tyrosine phosphorylated) with SHC1, GRB7, GRB10 and NCK1. Interaction with GRB2 is mediated by SHC1. Interacts (via C-terminus) with NHERF1. N-glycosylated. Post-translationally, ubiquitinated. After autophosphorylation, the receptor is polyubiquitinated, leading to its degradation. In terms of processing, autophosphorylated on tyrosine residues upon ligand binding. Autophosphorylation occurs in trans, i.e. one subunit of the dimeric receptor phosphorylates tyrosine residues on the other subunit. Phosphorylation at Tyr-578, and to a lesser degree, Tyr-580 is important for interaction with SRC. Phosphorylation at Tyr-715 is important for interaction with GRB2. Phosphorylation at Tyr-739 and Tyr-750 is important for interaction with PIK3R1. Phosphorylation at Tyr-750 is important for interaction with NCK1. Phosphorylation at Tyr-770 and Tyr-856 is important for interaction with RASA1/GAP. Phosphorylation at Tyr-856 is important for efficient phosphorylation of PLCG1 and PTPN11, resulting in increased phosphorylation of AKT1, MAPK1/ERK2 and/or MAPK3/ERK1, PDCD6IP/ALIX and STAM, and in increased cell proliferation. Phosphorylation at Tyr-1008 is important for interaction with PTPN11. Phosphorylation at Tyr-1008 and Tyr-1020 is important for interaction with PLCG1. Dephosphorylated by PTPRJ at Tyr-750, Tyr-856, Tyr-1008 and Tyr-1020. Dephosphorylated by PTPN2 at Tyr-578 and Tyr-1020.

The protein localises to the cell membrane. It localises to the cytoplasmic vesicle. Its subcellular location is the lysosome lumen. The enzyme catalyses L-tyrosyl-[protein] + ATP = O-phospho-L-tyrosyl-[protein] + ADP + H(+). Its activity is regulated as follows. Present in an inactive conformation in the absence of bound ligand. Binding of PDGFB and/or PDGFD leads to dimerization and activation by autophosphorylation on tyrosine residues. In terms of biological role, tyrosine-protein kinase that acts as a cell-surface receptor for homodimeric PDGFB and PDGFD and for heterodimers formed by PDGFA and PDGFB, and plays an essential role in the regulation of embryonic development, cell proliferation, survival, differentiation, chemotaxis and migration. Plays an essential role in blood vessel development by promoting proliferation, migration and recruitment of pericytes and smooth muscle cells to endothelial cells. Plays a role in the migration of vascular smooth muscle cells and the formation of neointima at vascular injury sites. Required for normal development of the cardiovascular system. Required for normal recruitment of pericytes (mesangial cells) in the kidney glomerulus, and for normal formation of a branched network of capillaries in kidney glomeruli. Promotes rearrangement of the actin cytoskeleton and the formation of membrane ruffles. Binding of its cognate ligands - homodimeric PDGFB, heterodimers formed by PDGFA and PDGFB or homodimeric PDGFD -leads to the activation of several signaling cascades; the response depends on the nature of the bound ligand and is modulated by the formation of heterodimers between PDGFRA and PDGFRB. Phosphorylates PLCG1, PIK3R1, PTPN11, RASA1/GAP, CBL, SHC1 and NCK1. Activation of PLCG1 leads to the production of the cellular signaling molecules diacylglycerol and inositol 1,4,5-trisphosphate, mobilization of cytosolic Ca(2+) and the activation of protein kinase C. Phosphorylation of PIK3R1, the regulatory subunit of phosphatidylinositol 3-kinase, leads to the activation of the AKT1 signaling pathway. Phosphorylation of SHC1, or of the C-terminus of PTPN11, creates a binding site for GRB2, resulting in the activation of HRAS, RAF1 and down-stream MAP kinases, including MAPK1/ERK2 and/or MAPK3/ERK1. Promotes phosphorylation and activation of SRC family kinases. Promotes phosphorylation of PDCD6IP/ALIX and STAM. Receptor signaling is down-regulated by protein phosphatases that dephosphorylate the receptor and its down-stream effectors, and by rapid internalization of the activated receptor. The polypeptide is Platelet-derived growth factor receptor beta (Pdgfrb) (Rattus norvegicus (Rat)).